Consider the following 99-residue polypeptide: Signal recognition particle 19 kDa protein (99 aa).

This sequence belongs to the SRP19 family. Part of the signal recognition particle protein translocation system, which is composed of SRP and FtsY. Archaeal SRP consists of a 7S RNA molecule of 300 nucleotides and two protein subunits: SRP54 and SRP19.

It is found in the cytoplasm. Involved in targeting and insertion of nascent membrane proteins into the cytoplasmic membrane. Binds directly to 7S RNA and mediates binding of the 54 kDa subunit of the SRP. This Ignicoccus hospitalis (strain KIN4/I / DSM 18386 / JCM 14125) protein is Signal recognition particle 19 kDa protein.